Reading from the N-terminus, the 131-residue chain is 1,4-dihydroxy-2-naphthoyl-CoA hydrolase (131 aa).

Residue Asp7 is part of the active site.

It belongs to the 4-hydroxybenzoyl-CoA thioesterase family. DHNA-CoA hydrolase subfamily.

The enzyme catalyses 1,4-dihydroxy-2-naphthoyl-CoA + H2O = 1,4-dihydroxy-2-naphthoate + CoA + H(+). It participates in cofactor biosynthesis; phylloquinone biosynthesis. The protein operates within quinol/quinone metabolism; 1,4-dihydroxy-2-naphthoate biosynthesis; 1,4-dihydroxy-2-naphthoate from chorismate: step 7/7. Functionally, catalyzes the hydrolysis of 1,4-dihydroxy-2-naphthoyl-CoA (DHNA-CoA) to 1,4-dihydroxy-2-naphthoate (DHNA), a reaction involved in phylloquinone (vitamin K1) biosynthesis. This is 1,4-dihydroxy-2-naphthoyl-CoA hydrolase from Synechococcus sp. (strain RCC307).